The following is a 329-amino-acid chain: MTVQGVKFSGVGAATPRQCLTNAHLSALVDTSDEWIQSRTGIQERHVAAPDQRLVDLASEAAGAALQMAGLDPTAVDLIILATSTPDDLFGTACLVQTRIGAVNAVAFDLTAACSGFLFALVTAAQYLRTGAYRSALVVGGDILSRWVDWGDRRTCILFGDGAGAMVLQASDVDQLLSFELRSDGRLNEHLTLAFAGTPQTLGENLAIAQGGFAPITMNGREVYRFAVTQVPEVIEKALHRAGCTVEEIDWLVLHQANQRILDAVAERLGIPQEKVISNVGQCGNTSAASIPLALSKPIQQGHIQPGDLIATAGFGAGLTWGAALFRWQ.

Active-site residues include cysteine 114 and histidine 255. The tract at residues 256 to 260 is ACP-binding; it reads QANQR. Asparagine 285 is an active-site residue.

Belongs to the thiolase-like superfamily. FabH family. In terms of assembly, homodimer.

The protein resides in the cytoplasm. The enzyme catalyses malonyl-[ACP] + acetyl-CoA + H(+) = 3-oxobutanoyl-[ACP] + CO2 + CoA. The protein operates within lipid metabolism; fatty acid biosynthesis. Catalyzes the condensation reaction of fatty acid synthesis by the addition to an acyl acceptor of two carbons from malonyl-ACP. Catalyzes the first condensation reaction which initiates fatty acid synthesis and may therefore play a role in governing the total rate of fatty acid production. Possesses both acetoacetyl-ACP synthase and acetyl transacylase activities. Its substrate specificity determines the biosynthesis of branched-chain and/or straight-chain of fatty acids. The chain is Beta-ketoacyl-[acyl-carrier-protein] synthase III from Thermosynechococcus vestitus (strain NIES-2133 / IAM M-273 / BP-1).